The sequence spans 418 residues: UDP-N-acetylglucosamine 1-carboxyvinyltransferase (418 aa).

A phosphoenolpyruvate-binding site is contributed by 22–23 (KN). Residue Arg-92 participates in UDP-N-acetyl-alpha-D-glucosamine binding. The Proton donor role is filled by Cys-116. Position 116 is a 2-(S-cysteinyl)pyruvic acid O-phosphothioketal (Cys-116). Residues 121 to 125 (RPIDL), Asp-305, and Leu-327 contribute to the UDP-N-acetyl-alpha-D-glucosamine site.

It belongs to the EPSP synthase family. MurA subfamily.

The protein resides in the cytoplasm. The catalysed reaction is phosphoenolpyruvate + UDP-N-acetyl-alpha-D-glucosamine = UDP-N-acetyl-3-O-(1-carboxyvinyl)-alpha-D-glucosamine + phosphate. Its pathway is cell wall biogenesis; peptidoglycan biosynthesis. Functionally, cell wall formation. Adds enolpyruvyl to UDP-N-acetylglucosamine. In Campylobacter jejuni subsp. jejuni serotype O:6 (strain 81116 / NCTC 11828), this protein is UDP-N-acetylglucosamine 1-carboxyvinyltransferase.